Consider the following 20-residue polypeptide: Unknown protein from 2D-PAGE (20 aa).

The chain is Unknown protein from 2D-PAGE from Nicotiana tabacum (Common tobacco).